A 482-amino-acid polypeptide reads, in one-letter code: Potential E3 ubiquitin-protein ligase ariadne-2 (482 aa).

The interval 125–334 (AKGYCSVCAM…SEYYECSRYK (210 aa)) is TRIAD supradomain. The Zn(2+) site is built by cysteine 129, cysteine 132, cysteine 145, histidine 147, cysteine 150, cysteine 153, cysteine 172, cysteine 177, cysteine 218, cysteine 223, cysteine 239, cysteine 242, cysteine 247, cysteine 250, histidine 255, cysteine 260, cysteine 287, and cysteine 290. The RING-type 1 zinc-finger motif lies at 129-177 (CSVCAMDGYTELPHLTCGHCFCEHCWKSHVESRLSEGVASRIECMESEC). The segment at 198–260 (LKYERFLLRD…GADYHAPTSC (63 aa)) adopts an IBR-type zinc-finger fold. Residues 287–316 (CPQCHSCIEKAGGCNHIQCTRCRHHFCWMC) form an RING-type 2; atypical zinc finger. Cysteine 300 is a catalytic residue. 6 residues coordinate Zn(2+): cysteine 305, cysteine 308, cysteine 313, cysteine 316, histidine 323, and cysteine 330. A coiled-coil region spans residues 433–459 (FEYQQAQLEKEVEELAWAVERADGTAR).

It belongs to the RBR family. Ariadne subfamily.

It localises to the nucleus. It catalyses the reaction [E2 ubiquitin-conjugating enzyme]-S-ubiquitinyl-L-cysteine + [acceptor protein]-L-lysine = [E2 ubiquitin-conjugating enzyme]-L-cysteine + [acceptor protein]-N(6)-ubiquitinyl-L-lysine.. Might act as an E3 ubiquitin-protein ligase, or as part of E3 complex, which accepts ubiquitin from specific E2 ubiquitin-conjugating enzymes, such as UBC-2/UBE2L3, and then transfers it to substrates. The sequence is that of Potential E3 ubiquitin-protein ligase ariadne-2 from Caenorhabditis elegans.